Consider the following 473-residue polypeptide: Allene oxide synthase CYP74A2 (473 aa).

The heme b site is built by Lys-88, His-119, and Lys-123. Residues Ser-199 and Lys-282 each coordinate (13S)-hydroperoxy-(9Z,11E)-octadecadienoate. Positions 424 and 426 each coordinate heme b.

This sequence belongs to the cytochrome P450 family. It depends on heme b as a cofactor.

The catalysed reaction is (13S)-hydroperoxy-(9Z,11E,15Z)-octadecatrienoate = (9Z,13S,15Z)-12,13-epoxyoctadeca-9,11,15-trienoate + H2O. It catalyses the reaction (13S)-hydroperoxy-(9Z,11E)-octadecadienoate = (9Z,13S)-12,13-epoxyoctadeca-9,11-dienoate + H2O. It functions in the pathway lipid metabolism; oxylipin biosynthesis. In terms of biological role, cytochrome P450 enzyme involved in the biosynthesis of oxylipin jasmonates, important phytohormones acting as growth regulators and signaling molecules for plant defense. Functions as an allene oxide synthase that converts hydroperoxy fatty acids to unstable allene epoxides. Catalyzes the dehydration of 13-HPOTE ((13S)-hydroperoxy-(9Z,11E,15Z)-octadecatrienoate). Also catalyzes the dehydration of 13-HPODE ((13S)-hydroperoxy-(9Z,11E)-octadecadienoate). The sequence is that of Allene oxide synthase CYP74A2 from Parthenium argentatum (Guayule rubber plant).